The chain runs to 496 residues: Aldehyde dehydrogenase 1A1 (496 aa).

An N6-acetyllysine mark is found at Lys86 and Lys123. NAD(+) contacts are provided by residues 162–165, 188–191, 221–222, and 241–242; these read IPWN, KPAE, GP, and GS. Lys247 bears the N6-acetyllysine mark. The active-site Proton acceptor is Glu264. 264 to 266 is a binding site for NAD(+); the sequence is ELG. Cys298 acts as the Nucleophile in catalysis. The tract at residues 331–496 is mediates interaction with PRMT3; sequence LAPEVNQGPQ…VTVKISQKNS (166 aa). 344–348 is a binding site for NAD(+); sequence EQYNK. An N6-acetyllysine mark is found at Lys348 and Lys362. Residue 395 to 397 coordinates NAD(+); the sequence is EIF. Residue Lys405 is modified to N6-acetyllysine. The residue at position 408 (Ser408) is a Phosphoserine. Residues Lys414, Lys430, and Lys490 each carry the N6-acetyllysine modification.

It belongs to the aldehyde dehydrogenase family. In terms of assembly, homotetramer. Interacts with PRMT3; the interaction is direct, inhibits ALDH1A1 aldehyde dehydrogenase activity and is independent of the methyltransferase activity of PRMT3. The N-terminus is blocked most probably by acetylation.

The protein localises to the cytoplasm. Its subcellular location is the cytosol. It is found in the cell projection. It localises to the axon. The enzyme catalyses an aldehyde + NAD(+) + H2O = a carboxylate + NADH + 2 H(+). It carries out the reaction all-trans-retinal + NAD(+) + H2O = all-trans-retinoate + NADH + 2 H(+). It catalyses the reaction 9-cis-retinal + NAD(+) + H2O = 9-cis-retinoate + NADH + 2 H(+). The catalysed reaction is 11-cis-retinal + NAD(+) + H2O = 11-cis-retinoate + NADH + 2 H(+). The enzyme catalyses 13-cis-retinal + NAD(+) + H2O = 13-cis-retinoate + NADH + 2 H(+). It carries out the reaction (E)-4-hydroxynon-2-enal + NAD(+) + H2O = (E)-4-hydroxynon-2-enoate + NADH + 2 H(+). It catalyses the reaction malonaldehyde + NAD(+) + H2O = 3-oxopropanoate + NADH + 2 H(+). The catalysed reaction is hexanal + NAD(+) + H2O = hexanoate + NADH + 2 H(+). The enzyme catalyses propanal + NAD(+) + H2O = propanoate + NADH + 2 H(+). It carries out the reaction 3-deoxyglucosone + NAD(+) + H2O = 2-dehydro-3-deoxy-D-gluconate + NADH + 2 H(+). It catalyses the reaction acetaldehyde + NAD(+) + H2O = acetate + NADH + 2 H(+). The catalysed reaction is benzaldehyde + NAD(+) + H2O = benzoate + NADH + 2 H(+). The enzyme catalyses 4-aminobutanal + NAD(+) + H2O = 4-aminobutanoate + NADH + 2 H(+). It functions in the pathway cofactor metabolism; retinol metabolism. Its function is as follows. Cytosolic dehydrogenase that catalyzes the irreversible oxidation of a wide range of aldehydes to their corresponding carboxylic acid. Functions downstream of retinol dehydrogenases and catalyzes the oxidation of retinaldehyde into retinoic acid, the second step in the oxidation of retinol/vitamin A into retinoic acid. This pathway is crucial to control the levels of retinol and retinoic acid, two important molecules which excess can be teratogenic and cytotoxic. Also oxidizes aldehydes resulting from lipid peroxidation like (E)-4-hydroxynon-2-enal/HNE, malonaldehyde and hexanal that form protein adducts and are highly cytotoxic. By participating for instance to the clearance of (E)-4-hydroxynon-2-enal/HNE in the lens epithelium prevents the formation of HNE-protein adducts and lens opacification. Functions also downstream of fructosamine-3-kinase in the fructosamine degradation pathway by catalyzing the oxidation of 3-deoxyglucosone, the carbohydrate product of fructosamine 3-phosphate decomposition, which is itself a potent glycating agent that may react with lysine and arginine side-chains of proteins. Also has an aminobutyraldehyde dehydrogenase activity and is probably part of an alternative pathway for the biosynthesis of GABA/4-aminobutanoate in midbrain, thereby playing a role in GABAergic synaptic transmission. The sequence is that of Aldehyde dehydrogenase 1A1 from Oryctolagus cuniculus (Rabbit).